The chain runs to 346 residues: MTTVLAIETSCDETAVAIVNNRQVCSSIIASQIPVHQQYGGVVPEVASRAHLETINDAIAQAMDQAQLGWDKIDGIAATCAPGLVGALLVGLTAAKTLAILHNKPFLGVHHLEGHIYATYLSEPTLDPPFLSLLVSGGHTSLIYVKECGRYESLGETRDDAAGEAFDKVARLLKLGYPGGPVIDKLAQTGNSQAFALPEGKVSLAGGGYHPYDGSFSGLKTAVLRLVQQLERDGDPLPIEDISASFQATVAKALTKRAIACALDYGLDTIAVGGGVAANSGLRQHLQAAATANNLRVLFPPLKFCTDNAAMIACAAADHLSRGHLSPITLGVESRLSLSQVMKLYQ.

Fe cation is bound by residues histidine 111 and histidine 115. Substrate is bound by residues 134–138 (LVSGG), aspartate 167, glycine 180, aspartate 184, and asparagine 279. Aspartate 307 contacts Fe cation.

Belongs to the KAE1 / TsaD family. The cofactor is Fe(2+).

It is found in the cytoplasm. It carries out the reaction L-threonylcarbamoyladenylate + adenosine(37) in tRNA = N(6)-L-threonylcarbamoyladenosine(37) in tRNA + AMP + H(+). Required for the formation of a threonylcarbamoyl group on adenosine at position 37 (t(6)A37) in tRNAs that read codons beginning with adenine. Is involved in the transfer of the threonylcarbamoyl moiety of threonylcarbamoyl-AMP (TC-AMP) to the N6 group of A37, together with TsaE and TsaB. TsaD likely plays a direct catalytic role in this reaction. In Trichormus variabilis (strain ATCC 29413 / PCC 7937) (Anabaena variabilis), this protein is tRNA N6-adenosine threonylcarbamoyltransferase.